A 429-amino-acid chain; its full sequence is MAEAAVASTVTLPVTGGWTKHVTCRYFMHGLCKEGDNCRYSHDLTSSKPAAMMCKFFQKGNCVFGERCRFEHCKPTKSEEVSNPQMLLLSSTPPPIDPECSESGPRLKTQDWANAAEFVPGQPYCGRAESVDVEISIPLIEELNGDATTDKEELRKQLCPYAAVGECRYGVNCAYLHGDVCDMCGLQVLHPTDSSQRSEHTKACIEAHEKDMEISFAIQRSKDMMCGVCMEVVFEKANPSERRFGILSNCSHCYCLKCIRKWRSAKQFESKIIKSCPECRITSNFVIPSEYWVEDKEDKQKLIQKYKDGMGRKPCRYFDEGRGICPFGANCFYKHAFPDGRLEEAQPQRRQTGSSSRNRNSRRTQLWDIIDERESTGSLDNDDEEMVTFELSEMLLMLLAAGNDEEVTDSEDEWDLFHEELDDFYEIYL.

C3H1-type zinc fingers lie at residues 18–45, 48–75, and 153–180; these read WTKH…HDLT, KPAA…HCKP, and ELRK…HGDV. The tract at residues 181-208 is makorin-type Cys-His; sequence CDMCGLQVLHPTDSSQRSEHTKACIEAH. An RING-type zinc finger spans residues 226 to 280; sequence CGVCMEVVFEKANPSERRFGILSNCSHCYCLKCIRKWRSAKQFESKIIKSCPECR. A C3H1-type 4 zinc finger spans residues 309–338; that stretch reads GMGRKPCRYFDEGRGICPFGANCFYKHAFP. The disordered stretch occupies residues 343-362; that stretch reads EEAQPQRRQTGSSSRNRNSR. Residues 348–358 show a composition bias toward low complexity; that stretch reads QRRQTGSSSRN.

The catalysed reaction is S-ubiquitinyl-[E2 ubiquitin-conjugating enzyme]-L-cysteine + [acceptor protein]-L-lysine = [E2 ubiquitin-conjugating enzyme]-L-cysteine + N(6)-ubiquitinyl-[acceptor protein]-L-lysine.. Its pathway is protein modification; protein ubiquitination. Functionally, E3 ubiquitin ligase catalyzing the covalent attachment of ubiquitin moieties onto substrate proteins. This chain is Probable E3 ubiquitin-protein ligase makorin-1, found in Takifugu rubripes (Japanese pufferfish).